A 277-amino-acid polypeptide reads, in one-letter code: Insertion element IS407 uncharacterized 31.7 kDa protein (277 aa).

An Integrase catalytic domain is found at 103–264; the sequence is LPGAPNEVWS…APSEFAAKHR (162 aa).

The protein is Insertion element IS407 uncharacterized 31.7 kDa protein of Burkholderia multivorans (strain ATCC 17616 / 249).